Reading from the N-terminus, the 558-residue chain is EF-hand and coiled-coil domain-containing protein 1 (558 aa).

The region spanning Gly43 to Asn78 is the EF-hand domain. Residues Leu161–Pro170 show a composition bias toward basic residues. Disordered regions lie at residues Leu161–Arg183 and Arg304–Gly395. 2 coiled-coil regions span residues Ala179–Arg304 and Val453–Ser495.

This is EF-hand and coiled-coil domain-containing protein 1 (Efcc1) from Mus musculus (Mouse).